The primary structure comprises 420 residues: Putative T-box protein 33 (420 aa).

Residues 93–291 constitute a DNA-binding region (T-box); sequence LWKELHYLSN…ANPTSRGDAK (199 aa). Residues 395–412 show a composition bias toward polar residues; it reads SPPLQPTATSPEASQNQI. Residues 395–420 form a disordered region; it reads SPPLQPTATSPEASQNQIKLEMNQYM.

The protein resides in the nucleus. This Caenorhabditis elegans protein is Putative T-box protein 33 (tbx-33).